A 450-amino-acid chain; its full sequence is Trehalose/maltose-binding protein MalE (450 aa).

The first 24 residues, 1–24 (MNVKKVLLGLFLVGVLGIAVVASG), serve as a signal peptide directing secretion. Residues E57, T84, R89, D110, Y161, D163, Y217, E279, W297, Y299, G334, W335, W371, and R404 each coordinate alpha,alpha-trehalose.

The protein belongs to the bacterial solute-binding protein 1 family. The complex is composed of two ATP-binding proteins (MalK), two transmembrane proteins (MalG and MalF) and a solute-binding protein (MalE). Glycosylated.

The protein resides in the cell membrane. Functionally, part of the ABC transporter complex MalEFGK involved in trehalose/maltose import. Binds maltose and trehalose. The protein is Trehalose/maltose-binding protein MalE (malE) of Thermococcus litoralis (strain ATCC 51850 / DSM 5473 / JCM 8560 / NS-C).